Here is a 340-residue protein sequence, read N- to C-terminus: MLYPLIRKGIFALEPENAHDLAIKMLHLAGNPILNKLLKALLACPSGNEKTVMGIKFKNPIGLAAGADKNGDAIDGFGAMGFGFIEVGTVTPLAQDGNAKPRQFRIVEAEGIVNRNGFNNYGVDYLVENVKKAKFDGVIGINIGKNKVTPVERGKDDYIFCLNKAYNYAGYITVNISSPNTPGLRQLQYGDALDDLLKSIKERQAYLAQVYNKYVPIAVKIAPDQTEEELVQIADTLRRHKMDGVIATNTTISRDTVAGMKNADQTGGLSGKPLQHKSTEIIRRLQQELKGEIPIIGSGGIDGVQNAQEKIVAGAELLQVYSGLIYHGPGLVKALVEAIR.

FMN is bound by residues 65-69 and threonine 89; that span reads AGADK. Lysine 69 provides a ligand contact to substrate. A substrate-binding site is contributed by 114–118; it reads NRNGF. Positions 142 and 175 each coordinate FMN. Asparagine 175 contacts substrate. Serine 178 (nucleophile) is an active-site residue. Residue asparagine 180 coordinates substrate. Residues lysine 220 and threonine 248 each coordinate FMN. 249–250 contributes to the substrate binding site; sequence NT. FMN is bound by residues glycine 271, glycine 300, and 321 to 322; that span reads YS.

The protein belongs to the dihydroorotate dehydrogenase family. Type 2 subfamily. In terms of assembly, monomer. Requires FMN as cofactor.

It localises to the cell membrane. It catalyses the reaction (S)-dihydroorotate + a quinone = orotate + a quinol. It functions in the pathway pyrimidine metabolism; UMP biosynthesis via de novo pathway; orotate from (S)-dihydroorotate (quinone route): step 1/1. In terms of biological role, catalyzes the conversion of dihydroorotate to orotate with quinone as electron acceptor. The protein is Dihydroorotate dehydrogenase (quinone) of Mannheimia succiniciproducens (strain KCTC 0769BP / MBEL55E).